The chain runs to 31 residues: Cytochrome b6-f complex subunit 6 (31 aa).

Residues 3-23 (ILINYFLLVGFCFALASGLFL) traverse the membrane as a helical segment.

It belongs to the PetL family. As to quaternary structure, the 4 large subunits of the cytochrome b6-f complex are cytochrome b6, subunit IV (17 kDa polypeptide, PetD), cytochrome f and the Rieske protein, while the 4 small subunits are PetG, PetL, PetM and PetN. The complex functions as a dimer.

It is found in the plastid. Its subcellular location is the chloroplast thylakoid membrane. Functionally, component of the cytochrome b6-f complex, which mediates electron transfer between photosystem II (PSII) and photosystem I (PSI), cyclic electron flow around PSI, and state transitions. PetL is important for photoautotrophic growth as well as for electron transfer efficiency and stability of the cytochrome b6-f complex. This Thalassiosira pseudonana (Marine diatom) protein is Cytochrome b6-f complex subunit 6.